The chain runs to 290 residues: 4-hydroxybenzoate octaprenyltransferase (290 aa).

The next 8 membrane-spanning stretches (helical) occupy residues 21 to 41 (IGTLLLLWPTLWALFLSVKGM), 44 to 64 (LSILSIFVLGVIFMRAAGCVI), 84 to 104 (LATGAATPEEAKWLFVLLVFC), 106 to 126 (FILVLFLNTYAIVLSFIAVFL), 142 to 162 (LFLGMAFGWSIPMAYGASIEA), 212 to 232 (IISLLQIVTLFFLGLIGYLSQ), 235 to 255 (TSYFVVLFLATLLFVYQCKLI), and 267 to 287 (FLNNNYFGAMVFVAFLFGIFF).

The protein belongs to the UbiA prenyltransferase family. Requires Mg(2+) as cofactor.

The protein resides in the cell inner membrane. The catalysed reaction is all-trans-octaprenyl diphosphate + 4-hydroxybenzoate = 4-hydroxy-3-(all-trans-octaprenyl)benzoate + diphosphate. The protein operates within cofactor biosynthesis; ubiquinone biosynthesis. Catalyzes the prenylation of para-hydroxybenzoate (PHB) with an all-trans polyprenyl group. Mediates the second step in the final reaction sequence of ubiquinone-8 (UQ-8) biosynthesis, which is the condensation of the polyisoprenoid side chain with PHB, generating the first membrane-bound Q intermediate 3-octaprenyl-4-hydroxybenzoate. The chain is 4-hydroxybenzoate octaprenyltransferase from Pasteurella multocida (strain Pm70).